Consider the following 477-residue polypeptide: Sporulation-specific protein 77 (477 aa).

Residues 428-452 (SQQRESSNAESESITSSTEEDEEGL) are disordered. Low complexity predominate over residues 432–444 (ESSNAESESITSS).

Its subcellular location is the cytoplasm. Required for spore wall assembly and ascus formation. This Saccharomyces cerevisiae (strain ATCC 204508 / S288c) (Baker's yeast) protein is Sporulation-specific protein 77 (SPO77).